Consider the following 140-residue polypeptide: 3-hydroxyacyl-[acyl-carrier-protein] dehydratase FabZ (140 aa).

His47 is an active-site residue.

This sequence belongs to the thioester dehydratase family. FabZ subfamily.

It is found in the cytoplasm. It catalyses the reaction a (3R)-hydroxyacyl-[ACP] = a (2E)-enoyl-[ACP] + H2O. Its function is as follows. Involved in unsaturated fatty acids biosynthesis. Catalyzes the dehydration of short chain beta-hydroxyacyl-ACPs and long chain saturated and unsaturated beta-hydroxyacyl-ACPs. The chain is 3-hydroxyacyl-[acyl-carrier-protein] dehydratase FabZ from Streptococcus gordonii (strain Challis / ATCC 35105 / BCRC 15272 / CH1 / DL1 / V288).